A 66-amino-acid polypeptide reads, in one-letter code: Truncated interferon antagonist OPG039 (66 aa).

One copy of the ANK repeat lies at 29–58 (HGHSALYYAIADNNMRLVCTLLNAGALKNL).

The protein belongs to the orthopoxvirus OPG039 family.

This is Truncated interferon antagonist OPG039 (OPG040) from Homo sapiens (Human).